A 209-amino-acid polypeptide reads, in one-letter code: Dual specificity protein phosphatase 22 (209 aa).

One can recognise a Tyrosine-protein phosphatase domain in the interval 4 to 144 (GMNKILTGLF…LEDFGKCEVH (141 aa)). Cys88 serves as the catalytic Phosphocysteine intermediate. A disordered region spans residues 169–192 (LDKHKQQEAAESQNATSSGRQWNS). Polar residues predominate over residues 177-190 (AAESQNATSSGRQW).

It belongs to the protein-tyrosine phosphatase family. Non-receptor class dual specificity subfamily.

Its subcellular location is the cytoplasm. The protein localises to the nucleus. It carries out the reaction O-phospho-L-tyrosyl-[protein] + H2O = L-tyrosyl-[protein] + phosphate. The enzyme catalyses O-phospho-L-seryl-[protein] + H2O = L-seryl-[protein] + phosphate. The catalysed reaction is O-phospho-L-threonyl-[protein] + H2O = L-threonyl-[protein] + phosphate. Activates the Jnk signaling pathway. Dephosphorylates and deactivates p38 and stress-activated protein kinase/c-Jun N-terminal kinase (SAPK/JNK). This Xenopus laevis (African clawed frog) protein is Dual specificity protein phosphatase 22 (dusp22).